A 119-amino-acid chain; its full sequence is Protein TusC (119 aa).

This sequence belongs to the DsrF/TusC family. As to quaternary structure, heterohexamer, formed by a dimer of trimers. The hexameric TusBCD complex contains 2 copies each of TusB, TusC and TusD. The TusBCD complex interacts with TusE.

The protein resides in the cytoplasm. In terms of biological role, part of a sulfur-relay system required for 2-thiolation of 5-methylaminomethyl-2-thiouridine (mnm(5)s(2)U) at tRNA wobble positions. In Shigella dysenteriae serotype 1 (strain Sd197), this protein is Protein TusC.